Reading from the N-terminus, the 796-residue chain is Protein SEY1 homolog (796 aa).

Over 1–701 (MESSNDFSNK…AGTSISSWRN (701 aa)) the chain is Cytoplasmic. Positions 46-280 (GFRFNVVTIL…VPSDGFFVYS (235 aa)) constitute a GB1/RHD3-type G domain. 56–63 (GSQSSGKS) contacts GTP. The stretch at 554-626 (SLVLLLKAAR…DALTLLKVLK (73 aa)) forms a coiled coil. The chain crosses the membrane as a helical span at residues 702-722 (IPPIFWLVLLVLGWNELRSVF). Topologically, residues 723 to 725 (KVL) are lumenal. Residues 726–746 (LRFYVVIPLLIVFYFTFSYSA) traverse the membrane as a helical segment. Over 747–796 (TKLLGPKADQYVKPVRDKVLSLFTALLAWFVRTLHMIASKSSSFKQRPAT) the chain is Cytoplasmic.

The protein belongs to the TRAFAC class dynamin-like GTPase superfamily. GB1/RHD3 GTPase family. RHD3 subfamily.

It is found in the endoplasmic reticulum membrane. Its function is as follows. Probable GTP-binding protein that may be involved in cell development. This Theileria parva (East coast fever infection agent) protein is Protein SEY1 homolog.